The chain runs to 316 residues: Neutrophil-stimulating factor 1 (316 aa).

The first 21 residues, 1–21, serve as a signal peptide directing secretion; sequence METSLPITVVFLIVLITGAQT. The interval 126–316 is involved in interaction with human CD47; the sequence is HGEMLERMTA…WFAVSWNDRG (191 aa). Asparagine 169 carries an N-linked (GlcNAc...) asparagine glycan.

As to quaternary structure, interacts with human CD4. Interacts with human CD47; the interaction results in inhibition of phagocytosis activity of host macrophages. Female salivary gland (at protein level). Saliva (at protein level). Some expression in ovary and midgut (at protein level).

The protein resides in the secreted. Functionally, activates host neutrophils; induces expression of IL1B and CXCL2 at the bite site. Promotes activation of human CD4(+) T-cells. Inhibits phagocytosis activity of host macrophages via the interaction with CD47 receptor on their surface. Suppresses expression of pro-inflammatory cytokines, such as IFN-gamma/IFNG, IL2, TNF-alpha/TNF, IL12B, IL8/CXCL8, IL6, in host white blood cells. Reduces host polymorphonuclear neutrophil chemotaxis induced by N-formylmethionine-leucylphenylalanine (fMLF). Reduces CD11b/ITGAM expression in fMLF-induced host polymorphonuclear neutrophils. In terms of biological role, (Microbial infection) Enhances early replication of Zika virus in the host. The sequence is that of Neutrophil-stimulating factor 1 from Aedes aegypti (Yellowfever mosquito).